Reading from the N-terminus, the 616-residue chain is Dihydroxy-acid dehydratase (616 aa).

Asp81 provides a ligand contact to Mg(2+). Cys122 is a binding site for [2Fe-2S] cluster. 2 residues coordinate Mg(2+): Asp123 and Lys124. N6-carboxylysine is present on Lys124. Cys195 provides a ligand contact to [2Fe-2S] cluster. Glu491 is a Mg(2+) binding site. Residue Ser517 is the Proton acceptor of the active site.

Belongs to the IlvD/Edd family. Homodimer. The cofactor is [2Fe-2S] cluster. Requires Mg(2+) as cofactor.

The catalysed reaction is (2R)-2,3-dihydroxy-3-methylbutanoate = 3-methyl-2-oxobutanoate + H2O. It catalyses the reaction (2R,3R)-2,3-dihydroxy-3-methylpentanoate = (S)-3-methyl-2-oxopentanoate + H2O. It participates in amino-acid biosynthesis; L-isoleucine biosynthesis; L-isoleucine from 2-oxobutanoate: step 3/4. It functions in the pathway amino-acid biosynthesis; L-valine biosynthesis; L-valine from pyruvate: step 3/4. Functions in the biosynthesis of branched-chain amino acids. Catalyzes the dehydration of (2R,3R)-2,3-dihydroxy-3-methylpentanoate (2,3-dihydroxy-3-methylvalerate) into 2-oxo-3-methylpentanoate (2-oxo-3-methylvalerate) and of (2R)-2,3-dihydroxy-3-methylbutanoate (2,3-dihydroxyisovalerate) into 2-oxo-3-methylbutanoate (2-oxoisovalerate), the penultimate precursor to L-isoleucine and L-valine, respectively. This Shigella boydii serotype 4 (strain Sb227) protein is Dihydroxy-acid dehydratase.